The chain runs to 278 residues: 2,5-diketo-D-gluconic acid reductase A (278 aa).

Tyr50 serves as the catalytic Proton donor. Residue His108 participates in substrate binding. Residue 188 to 242 (GPLGQGKYDLFGAEPVTAAAAAHGKTPAQAVLRWHLQKGFVVFPKSVRRERLEEN) coordinates NADP(+). Positions 259 to 278 (DAMDPGDGSGRVSAHPDEVD) are disordered.

It belongs to the aldo/keto reductase family. Monomer.

It is found in the cytoplasm. It carries out the reaction 2-dehydro-L-idonate + NADP(+) = 2,5-didehydro-D-gluconate + NADPH + H(+). Its activity is regulated as follows. Inhibited by Zn(2+), Fe(3+), Cu(2+) and Ni(2+). Functionally, catalyzes the reduction of 2,5-diketo-D-gluconic acid (25DKG) to 2-keto-L-gulonic acid (2KLG). 5-keto-D-fructose and dihydroxyacetone can also serve as substrates. 25DKGR-A exhibits a greater selectivity for the substrate and higher thermal stability than 25DKGR-B. This is 2,5-diketo-D-gluconic acid reductase A (dkgA) from Corynebacterium sp. (strain ATCC 31090).